The sequence spans 359 residues: 3-dehydroquinate synthase (359 aa).

NAD(+) is bound by residues 72–77, 106–110, 130–131, K143, and K152; these read DGEHYK, GVIGD, and TT. 3 residues coordinate Zn(2+): E185, H248, and H265.

Belongs to the sugar phosphate cyclases superfamily. Dehydroquinate synthase family. Co(2+) is required as a cofactor. It depends on Zn(2+) as a cofactor. Requires NAD(+) as cofactor.

The protein localises to the cytoplasm. The catalysed reaction is 7-phospho-2-dehydro-3-deoxy-D-arabino-heptonate = 3-dehydroquinate + phosphate. The protein operates within metabolic intermediate biosynthesis; chorismate biosynthesis; chorismate from D-erythrose 4-phosphate and phosphoenolpyruvate: step 2/7. In terms of biological role, catalyzes the conversion of 3-deoxy-D-arabino-heptulosonate 7-phosphate (DAHP) to dehydroquinate (DHQ). The polypeptide is 3-dehydroquinate synthase (Thermodesulfovibrio yellowstonii (strain ATCC 51303 / DSM 11347 / YP87)).